A 925-amino-acid polypeptide reads, in one-letter code: Neuropilin-2 (925 aa).

The first 22 residues, 1-22 (MDMFPLTWIFLALYFSGHKVRS), serve as a signal peptide directing secretion. Topologically, residues 23-858 (QQDPPCGGRL…EKSWLYTLDP (836 aa)) are extracellular. 3 disulfide bridges follow: C28-C55, C83-C105, and C149-C175. 2 consecutive CUB domains span residues 28 to 142 (CGGR…YEIF) and 149 to 267 (CSKN…YYLV). Residues N152 and N157 are each glycosylated (N-linked (GlcNAc...) asparagine). Residues E197, D211, and D252 each contribute to the Ca(2+) site. C208 and C230 are disulfide-bonded. 2 disulfides stabilise this stretch: C277-C427 and C434-C592. 2 F5/8 type C domains span residues 277 to 427 (CNAP…LFGC) and 434 to 592 (CSNM…VLGC). Over residues 297-310 (STFSDGRWTPQQSR) the composition is skewed to polar residues. The disordered stretch occupies residues 297–317 (STFSDGRWTPQQSRLHGDDNG). The interval 601–621 (VETLGPTVKSEETTTPYPMDE) is disordered. N629 is a glycosylation site (N-linked (GlcNAc...) asparagine). Positions 642–802 (SGFNCNFDFP…TDVPLENCME (161 aa)) constitute an MAM domain. Residues 820–830 (YEDEIDDDYEG) are compositionally biased toward acidic residues. The tract at residues 820 to 849 (YEDEIDDDYEGDWNNSSSTSGAGSPSSGKE) is disordered. Residues N833 and N834 are each glycosylated (N-linked (GlcNAc...) asparagine). Over residues 835-846 (SSSTSGAGSPSS) the composition is skewed to low complexity. Residues 859–883 (ILITIIAMSSLGVLLGATCAGLLLY) form a helical membrane-spanning segment. The Cytoplasmic portion of the chain corresponds to 884–925 (CTCSYSGLSSRSCTTLENYNFELYDGLKHKVKINHQKCCSEA).

Belongs to the neuropilin family. In terms of assembly, heterodimer with NRP1. Binds PLXNB1. In terms of tissue distribution, found in certain neuronal populations of the CNS, including dorsal root ganglia, and in other non-neuronal tissues including mesenchymal tissue lining in the ribs.

Its subcellular location is the membrane. Functionally, high affinity receptor for semaphorins 3C, 3F, VEGF-165 and VEGF-145 isoforms of VEGF, and the PLGF-2 isoform of PGF. The sequence is that of Neuropilin-2 (Nrp2) from Rattus norvegicus (Rat).